The sequence spans 273 residues: NADPH-dependent 7-cyano-7-deazaguanine reductase (273 aa).

Substrate is bound at residue 81-83; it reads VES. 83-84 serves as a coordination point for NADPH; the sequence is SK. The active-site Thioimide intermediate is Cys-179. Asp-186 (proton donor) is an active-site residue. Residue 218 to 219 coordinates substrate; sequence AE. NADPH is bound at residue 247 to 248; that stretch reads RG.

The protein belongs to the GTP cyclohydrolase I family. QueF type 2 subfamily. In terms of assembly, homodimer.

It is found in the cytoplasm. The catalysed reaction is 7-aminomethyl-7-carbaguanine + 2 NADP(+) = 7-cyano-7-deazaguanine + 2 NADPH + 3 H(+). It functions in the pathway tRNA modification; tRNA-queuosine biosynthesis. Functionally, catalyzes the NADPH-dependent reduction of 7-cyano-7-deazaguanine (preQ0) to 7-aminomethyl-7-deazaguanine (preQ1). The polypeptide is NADPH-dependent 7-cyano-7-deazaguanine reductase (Rickettsia bellii (strain OSU 85-389)).